The following is a 112-amino-acid chain: MARGGFPGGMGNMNNLMKQAQMLQKQMQSMQEEIEASEFEGSAGGGAVVAKVNGKKELIALNIKPEVVDPDDVEMLEDLVFSAVKQALEKASEETSEKMGKLTGGMGMPGLF.

The segment covering 91 to 100 has biased composition (basic and acidic residues); the sequence is ASEETSEKMG. The disordered stretch occupies residues 91–112; sequence ASEETSEKMGKLTGGMGMPGLF. The span at 102-112 shows a compositional bias: gly residues; that stretch reads LTGGMGMPGLF.

This sequence belongs to the YbaB/EbfC family. As to quaternary structure, homodimer.

The protein resides in the cytoplasm. It localises to the nucleoid. Binds to DNA and alters its conformation. May be involved in regulation of gene expression, nucleoid organization and DNA protection. The polypeptide is Nucleoid-associated protein CPR_0056 (Clostridium perfringens (strain SM101 / Type A)).